We begin with the raw amino-acid sequence, 110 residues long: Nodulation protein NolE (110 aa).

The N-terminal stretch at 1-25 (MKVTGYYVIVAALLALALRAGPSLA) is a signal peptide. A disordered region spans residues 27–64 (DDRNQDCGPATSDPRANLNGADKAHSAEHTQDFNCQDT). Over residues 48–57 (DKAHSAEHTQ) the composition is skewed to basic and acidic residues.

It is found in the periplasm. This Rhizobium leguminosarum bv. phaseoli protein is Nodulation protein NolE (nolE).